We begin with the raw amino-acid sequence, 341 residues long: MLSLSKNWNALIKTDKVSYESFHETNNKSKIIVEPLERGFGLTLGNAMRRVLLSSLQGAAVTSIKIPGIEHEFSSIPGVKEDISEIILNVKGIEIKMHVAEKRVIRLKATGPGAITAGMIEAGHDVEILNPDHVICNLAKNKQFEMELTCKVGKGYTLSTNNNEDNNLPIGEIAIDALFNPVKSVTYKVENTRIGQVTDYDKLIMFVETNGDILPEMAVGLAARILQEQLQLFISFEEQEEDKQVKTDALPFSPYLLKRVDELELSVRSANCLKNDNIIYIGDLVKRTEADMLRTPNFGRKSLNEIKEILAKFSLRFGMDVPDWPPENIHELSKRYEDSYN.

The tract at residues 1 to 237 (MLSLSKNWNA…EQLQLFISFE (237 aa)) is alpha N-terminal domain (alpha-NTD). The alpha C-terminal domain (alpha-CTD) stretch occupies residues 252–341 (FSPYLLKRVD…LSKRYEDSYN (90 aa)).

The protein belongs to the RNA polymerase alpha chain family. In terms of assembly, homodimer. The RNAP catalytic core consists of 2 alpha, 1 beta, 1 beta' and 1 omega subunit. When a sigma factor is associated with the core the holoenzyme is formed, which can initiate transcription.

The catalysed reaction is RNA(n) + a ribonucleoside 5'-triphosphate = RNA(n+1) + diphosphate. DNA-dependent RNA polymerase catalyzes the transcription of DNA into RNA using the four ribonucleoside triphosphates as substrates. In Rickettsia bellii (strain OSU 85-389), this protein is DNA-directed RNA polymerase subunit alpha.